A 392-amino-acid chain; its full sequence is Multidrug resistance protein MdtL (392 aa).

12 consecutive transmembrane segments (helical) span residues 4–24 (FLLC…MYLV), 38–58 (AQLH…MLFA), 70–90 (VAIV…QAHA), 95–115 (LVGR…AFAI), 131–151 (LLNG…HLIM), 158–178 (SLFY…VFIL), 209–229 (ILIT…SPVL), 246–266 (ALMA…LSLF), 270–290 (TLML…SLAT), 294–314 (LTLI…GVAM), 331–351 (VLGI…AIIG), and 357–377 (MLIG…LVVT).

Belongs to the major facilitator superfamily. DHA1 family. MdtL (TC 2.A.1.2.22) subfamily.

Its subcellular location is the cell inner membrane. The polypeptide is Multidrug resistance protein MdtL (Klebsiella pneumoniae (strain 342)).